Consider the following 192-residue polypeptide: Ion-translocating oxidoreductase complex subunit B (192 aa).

A hydrophobic region spans residues 1–26 (MEMIVIAVVALTLLALLFGMLLGYAS). The 4Fe-4S domain maps to 32 to 91 (EEDPVVDQVDELLPQSQCGQCGYPGCRPYAEAVANNGEQINRCVPGGEPVMQKIATLLNV). [4Fe-4S] cluster-binding residues include C49, C52, C57, C74, C117, C120, C123, C127, C147, C150, C153, and C157. 4Fe-4S ferredoxin-type domains follow at residues 108 to 137 (MLAV…GATR) and 138 to 167 (AMHT…LRPA).

Belongs to the 4Fe4S bacterial-type ferredoxin family. RnfB subfamily. In terms of assembly, the complex is composed of six subunits: RnfA, RnfB, RnfC, RnfD, RnfE and RnfG. [4Fe-4S] cluster serves as cofactor.

The protein localises to the cell inner membrane. Part of a membrane-bound complex that couples electron transfer with translocation of ions across the membrane. In Cronobacter sakazakii (strain ATCC BAA-894) (Enterobacter sakazakii), this protein is Ion-translocating oxidoreductase complex subunit B.